Here is a 28-residue protein sequence, read N- to C-terminus: Cliotide T21 (28 aa).

The segment at residues 1–28 is a cross-link (cyclopeptide (Asp-Asn)); the sequence is DLQCAETCVHSPCIGPCYCKHGLICYRN. Disulfide bonds link Cys4-Cys17, Cys8-Cys19, and Cys13-Cys25.

Post-translationally, contains 3 disulfide bonds. In terms of processing, this is a cyclic peptide. In terms of tissue distribution, expressed in root nodules but not in seed.

Its function is as follows. Probably participates in a plant defense mechanism. Not active against Gram-negative bacterium E.coli ATCC 700926 or Gram-positive bacterium S.aureus ATCC 12600 up to a concentration of 100 uM under low-salt conditions. This is Cliotide T21 from Clitoria ternatea (Butterfly pea).